Consider the following 61-residue polypeptide: DNA-directed RNA polymerase subunit Rpo6 (61 aa).

The protein belongs to the archaeal Rpo6/eukaryotic RPB6 RNA polymerase subunit family. As to quaternary structure, part of the RNA polymerase complex.

The protein resides in the cytoplasm. The catalysed reaction is RNA(n) + a ribonucleoside 5'-triphosphate = RNA(n+1) + diphosphate. DNA-dependent RNA polymerase (RNAP) catalyzes the transcription of DNA into RNA using the four ribonucleoside triphosphates as substrates. This Thermoplasma acidophilum (strain ATCC 25905 / DSM 1728 / JCM 9062 / NBRC 15155 / AMRC-C165) protein is DNA-directed RNA polymerase subunit Rpo6.